The chain runs to 2522 residues: Neurogenic locus notch homolog protein 1 (2522 aa).

A signal peptide spans 1–19; it reads MYRIGLLVLIWSLLGLAQG. EGF-like domains are found at residues 20-57, 58-99, 102-140, and 141-177; these read LRCTQTAEMCLNGGRCEMTPGGTGVCLCSSSYFGERCQ, YPNP…KVCL, VDNACVNNPCRNGGTCELLSSVSDYRCRCPPGWTGDSCQ, and QADPCASNPCANGGKCLPFETQYICKCPSGFHGATCK. Residues 20-1730 lie on the Extracellular side of the membrane; it reads LRCTQTAEMC…ETAKPPPPLY (1711 aa). Disulfide bonds link C22-C35, C29-C45, C47-C56, C62-C74, C68-C87, C89-C98, C106-C117, C111-C128, C130-C139, C145-C156, C150-C165, C167-C176, C183-C194, C188-C203, C205-C214, C221-C232, C226-C242, C244-C253, C260-C271, C265-C280, C282-C291, C298-C311, C305-C320, C322-C331, C338-C349, C343-C358, C360-C369, C375-C386, C380-C397, C399-C408, C415-C428, C422-C437, and C439-C448. One can recognise an EGF-like 5; calcium-binding domain in the interval 179 to 215; the sequence is DINECSQNPCRNGGQCLNEFGSYRCNCQNRFTGRNCE. The 38-residue stretch at 217–254 folds into the EGF-like 6 domain; sequence PYVPCNPSPCLNGGTCRQTDDTSYECTCLPGFSGQNCE. T231 carries an O-linked (Fuc...) threonine; alternate glycan. An O-linked (GalNAc...) threonine; alternate glycan is attached at T231. The EGF-like 7; calcium-binding domain occupies 256–292; it reads NIDDCPSNNCRNGGTCVDGVNTYNCQCPPDWTGQYCT. The EGF-like 8; calcium-binding domain maps to 294 to 332; that stretch reads DVDECQLMPNACQNGGTCHNTYGGYNCVCVNGWTGEDCS. In terms of domain architecture, EGF-like 9; calcium-binding spans 334–370; the sequence is NIDDCANAACHSGATCHDRVASFFCECPHGRTGLLCH. The EGF-like 10 domain occupies 371 to 409; the sequence is LDNACISNPCNEGSNCDTNPVNGKAICTCPPGYTGPACN. In terms of domain architecture, EGF-like 11; calcium-binding spans 411-449; sequence DVDECSLGANPCEHGGRCTNTLGSFQCNCPQGYAGPRCE. Residues T431 and S434 each contribute to the Ca(2+) site. An O-linked (Glc...) serine glycan is attached at S434. The Ca(2+) site is built by D451, V452, and E454. Residues 451–487 enclose the EGF-like 12; calcium-binding domain; sequence DVNECLSNPCQNDATCLDQIGEFQCICMPGYEGLYCE. 3 cysteine pairs are disulfide-bonded: C455–C466, C460–C475, and C477–C486. The O-linked (Glc...) serine glycan is linked to S457. T465 is a glycosylation site (O-linked (Fuc...) threonine). Ca(2+)-binding residues include D468 and Q469. Ca(2+) is bound by residues N489, I490, and E492. The 37-residue stretch at 489 to 525 folds into the EGF-like 13; calcium-binding domain; it reads NIDECASNPCLHNGKCVDKINEFHCECPTGFNGNLCQ. 75 disulfide bridges follow: C493/C504, C498/C513, C515/C524, C531/C542, C536/C551, C553/C562, C569/C579, C574/C588, C590/C599, C606/C617, C611/C626, C628/C637, C644/C654, C649/C663, C665/C674, C681/C692, C686/C701, C703/C712, C719/C729, C724/C738, C740/C749, C756/C767, C761/C776, C778/C787, C794/C805, C799/C814, C816/C825, C832/C843, C837/C854, C856/C865, C872/C883, C877/C892, C894/C903, C910/C921, C915/C930, C932/C941, C948/C959, C953/C968, C970/C979, C986/C997, C991/C1006, C1008/C1017, C1024/C1035, C1029/C1044, C1046/C1055, C1062/C1073, C1067/C1082, C1084/C1093, C1100/C1121, C1115/C1130, C1132/C1141, C1148/C1159, C1153/C1168, C1170/C1179, C1186/C1197, C1191/C1206, C1208/C1217, C1224/C1243, C1237/C1252, C1254/C1263, C1270/C1283, C1275/C1292, C1294/C1303, C1310/C1321, C1315/C1333, C1335/C1344, C1351/C1362, C1356/C1371, C1373/C1382, C1390/C1401, C1395/C1412, C1414/C1423, C1447/C1470, C1452/C1465, and C1461/C1477. An O-linked (Glc...) serine glycan is attached at S495. Residues D506 and K507 each coordinate Ca(2+). The region spanning 527-563 is the EGF-like 14; calcium-binding domain; that stretch reads DVDECASTPCKNGAKCLDGPNSYTCQCTEGFTGRHCE. In terms of domain architecture, EGF-like 15; calcium-binding spans 565–600; the sequence is DINECIPDPCHYGTCKDGIATFTCLCRPGYTGRLCD. The 37-residue stretch at 602-638 folds into the EGF-like 16; calcium-binding domain; that stretch reads DINECLSQPCQNGGQCTDRENGYICTCPKGTTGVNCE. The 36-residue stretch at 640-675 folds into the EGF-like 17; calcium-binding domain; the sequence is NLDDCASNPCDYGKCIDKIDGYECTCEPGYTGKMCN. The EGF-like 18; calcium-binding domain occupies 677–713; the sequence is NIDECASNPCRNGGTCKDKINGFTCVCPDGYHDHMCL. The EGF-like 19; calcium-binding domain maps to 715–750; it reads EVNECNSNPCIHGTCHDGINGYKCDCDAGWSGSNCD. Residues 752 to 788 enclose the EGF-like 20; calcium-binding domain; the sequence is NNNECESNPCMNGGTCKDMTGAYICTCRAGFSGPNCQ. The EGF-like 21; calcium-binding domain maps to 790-826; that stretch reads NINECASNPCLNRGTCIDDVAGYKCNCMLPYTGAICE. An EGF-like 22 domain is found at 828–866; the sequence is VLAPCSGSPCKNGGRCKESEDYETFSCECPPGWQGQTCE. Positions 868–904 constitute an EGF-like 23; calcium-binding domain; that stretch reads DMNECVNRPCRNGAMCQNTNGSYKCNCKPGYAGRHCE. Residue N887 is glycosylated (N-linked (GlcNAc...) asparagine). The EGF-like 24; calcium-binding domain occupies 906–942; it reads DIDDCQPNPCHNGGSCSDGINMFFCNCPAGFRGPKCE. Positions 944–980 constitute an EGF-like 25; calcium-binding domain; it reads DINECASNPCKNGANCTDCVNSYTCTCQPGFSGIHCE. A glycan (N-linked (GlcNAc...) asparagine) is linked at N958. In terms of domain architecture, EGF-like 26 spans 982 to 1018; it reads NTPDCTESSCFNGGTCIDGINTFSCQCPPGFTGNYCQ. Residues 1020 to 1056 form the EGF-like 27; calcium-binding domain; sequence DINECDSKPCLNGGTCQDSYGAYKCTCPQGYTGLNCQ. EGF-like domains are found at residues 1058 to 1094 and 1096 to 1142; these read LVRWCDSSPCKNGGKCWQTNNFYRCECKSGWTGVYCD and PSVS…SYCE. In terms of domain architecture, EGF-like 30; calcium-binding spans 1144–1180; the sequence is QVDECSPNPCQNGATCTDYLGGYSCECVAGYHGVNCS. N-linked (GlcNAc...) asparagine glycosylation is present at N1178. Residues 1182–1218 form the EGF-like 31; calcium-binding domain; sequence EINECLSHPCHNGGTCIDLINTYKCSCPRGTQGVHCE. The EGF-like 32; calcium-binding domain occupies 1220–1264; that stretch reads NVDDCTPFYDSVSLEPKCFNNGKCFDRVGGYNCICPPGFVGERCE. EGF-like domains follow at residues 1266–1304, 1306–1345, 1347–1383, and 1386–1424; these read DVNECLSNPCDPRGTQNCIQLVNDYRCECRQGFTGRRCD, VVDGCKGLPCRNGGTCAVASNTERGFICKCPPGFDGATCE, DARTCGNLRCQNGGTCISVLKSSKCVCSEGYTGATCQ, and VVSPCASRPCYNGGTCQFSPEEPFFQCFCPTNFNGLFCH. O-linked (Fuc...) threonine; alternate glycosylation is present at T1400. T1400 carries O-linked (GalNAc...) threonine; alternate glycosylation. LNR repeat units follow at residues 1447–1487, 1488–1529, and 1530–1564; these read CENE…PWKN, CTQS…CNPL, and YDQYCRDHFQDGHCDQGCNNAECEWDGLDCDNMPE. Ca(2+)-binding residues include N1458, D1473, and D1476. N1487 carries N-linked (GlcNAc...) asparagine glycosylation. Cystine bridges form between C1488-C1512, C1494-C1507, C1503-C1519, C1534-C1547, and C1543-C1559. Position 1500 (D1500) interacts with Ca(2+). N1508 carries N-linked (GlcNAc...) asparagine glycosylation. Ca(2+)-binding residues include D1515, D1518, D1540, D1555, and D1558. N1584 carries N-linked (GlcNAc...) asparagine glycosylation. Residues 1731–1751 form a helical membrane-spanning segment; it reads AMFSMLVIPLLIIFVIMVVIV. The Cytoplasmic segment spans residues 1752–2522; the sequence is NKKRRREHGQ…QRTHIPEAFK (771 aa). ANK repeat units lie at residues 1877–1920, 1925–1954, 1958–1988, 1992–2021, 2025–2054, and 2058–2087; these read DGFT…QLHN, TGETALHLAARYARADAAKRLLESSADANV, MGRTPLHAAVAADAQGVFQILIRNRATDLDA, DGTTPLILAARLAVEGMVEELINAHADVNA, FGKSALHWAAAVNNVDAAAVLLKSSANKDM, and KEETPLFLAAREGSYETAKVLLDHYANRDI. Disordered regions lie at residues 2146 to 2229, 2365 to 2404, and 2449 to 2522; these read MKPS…MPLN, LMQAQQMQQQQNLQLHQSVQQQQHQNSNATSTHIGSPFCS, and LTPP…EAFK. Positions 2184 to 2200 are enriched in low complexity; sequence SLLDSGSSGVLSPVDSL. Positions 2218–2229 are enriched in polar residues; sequence SPFQQSPSMPLN. Positions 2365-2390 are enriched in low complexity; the sequence is LMQAQQMQQQQNLQLHQSVQQQQHQN. 2 stretches are compositionally biased toward polar residues: residues 2391–2404 and 2449–2469; these read SNATSTHIGSPFCS and LTPPSQHSYSSPMDNTPSHQL. Positions 2479–2494 are enriched in low complexity; sequence PSPESPDQWSSSSPHS. The segment covering 2495-2514 has biased composition (polar residues); it reads NMSDWSEGISSPPTSMQPQR.

Belongs to the NOTCH family. Post-translationally, O-glycosylated on the EGF-like domains. Contains both O-linked fucose and O-linked glucose. O-linked glycosylation by galnt11 is involved in determination of left/right symmetry: glycosylation promotes activation of notch1, possibly by promoting cleavage by adam17, modulating the balance between motile and immotile (sensory) cilia at the left-right organiser (LRO). Synthesized in the endoplasmic reticulum as an inactive form which is proteolytically cleaved by a furin-like convertase in the trans-Golgi network before it reaches the plasma membrane to yield an active, ligand-accessible form. Cleavage results in a C-terminal fragment N(TM) and a N-terminal fragment N(EC). Following ligand binding, it is cleaved by adam17 to yield a membrane-associated intermediate fragment called notch extracellular truncation (NEXT). Following endocytosis, this fragment is then cleaved by presenilin dependent gamma-secretase to release a Notch-derived peptide containing the intracellular domain (NICD) from the membrane.

The protein resides in the cell membrane. The protein localises to the nucleus. Functions as a receptor for membrane-bound ligands Jagged-1 (JAG1), Jagged-2 (JAG2) and Delta-1 (DLL1) to regulate cell-fate determination. Upon ligand activation through the released notch intracellular domain (NICD) it forms a transcriptional activator complex with RBPJ/RBPSUH and activates genes of the enhancer of split locus. Affects the implementation of differentiation, proliferation and apoptotic programs. Involved in angiogenesis; negatively regulates endothelial cell proliferation and migration and angiogenic sprouting. Involved in the maturation of both CD4(+) and CD8(+) cells in the thymus. Important for follicular differentiation and possibly cell fate selection within the follicle. During cerebellar development, functions as a receptor for neuronal DNER and is involved in the differentiation of Bergmann glia. Represses neuronal and myogenic differentiation. May play an essential role in postimplantation development, probably in some aspect of cell specification and/or differentiation. May be involved in mesoderm development, somite formation and neurogenesis. Involved in determination of left/right symmetry by modulating the balance between motile and immotile (sensory) cilia at the left-right organiser (LRO). This Xenopus tropicalis (Western clawed frog) protein is Neurogenic locus notch homolog protein 1 (notch1).